The chain runs to 429 residues: tRNA threonylcarbamoyladenosine dehydratase 1 (429 aa).

2 helical membrane-spanning segments follow: residues 3 to 23 (NNTW…TQLA) and 74 to 94 (EQYI…TMLI). Ser259 carries the post-translational modification Phosphoserine. The helical transmembrane segment at 279-299 (LPELGTMPGIFGLSIATWILT) threads the bilayer.

The protein belongs to the HesA/MoeB/ThiF family.

The protein resides in the mitochondrion outer membrane. Catalyzes the ATP-dependent dehydration of threonylcarbamoyladenosine at position 37 (t(6)A37) to form cyclic t(6)A37 (ct(6)A37) in tRNAs that read codons beginning with adenine. This chain is tRNA threonylcarbamoyladenosine dehydratase 1 (TCD1), found in Saccharomyces cerevisiae (strain ATCC 204508 / S288c) (Baker's yeast).